The following is a 266-amino-acid chain: Thiazole synthase (266 aa).

K95 functions as the Schiff-base intermediate with DXP in the catalytic mechanism. 1-deoxy-D-xylulose 5-phosphate-binding positions include G156, A182–G183, and N204–T205.

Belongs to the ThiG family. Homotetramer. Forms heterodimers with either ThiH or ThiS.

It localises to the cytoplasm. It catalyses the reaction [ThiS sulfur-carrier protein]-C-terminal-Gly-aminoethanethioate + 2-iminoacetate + 1-deoxy-D-xylulose 5-phosphate = [ThiS sulfur-carrier protein]-C-terminal Gly-Gly + 2-[(2R,5Z)-2-carboxy-4-methylthiazol-5(2H)-ylidene]ethyl phosphate + 2 H2O + H(+). It participates in cofactor biosynthesis; thiamine diphosphate biosynthesis. Its function is as follows. Catalyzes the rearrangement of 1-deoxy-D-xylulose 5-phosphate (DXP) to produce the thiazole phosphate moiety of thiamine. Sulfur is provided by the thiocarboxylate moiety of the carrier protein ThiS. In vitro, sulfur can be provided by H(2)S. This chain is Thiazole synthase, found in Shewanella denitrificans (strain OS217 / ATCC BAA-1090 / DSM 15013).